The primary structure comprises 355 residues: 3-dehydroquinate synthase (355 aa).

NAD(+) is bound by residues 98–102, 122–123, Lys-135, Lys-144, and 162–165; these read GVVGD, TT, and TLDT. Zn(2+) contacts are provided by Glu-177, His-240, and His-257.

The protein belongs to the sugar phosphate cyclases superfamily. Dehydroquinate synthase family. The cofactor is Co(2+). Zn(2+) serves as cofactor. NAD(+) is required as a cofactor.

It localises to the cytoplasm. The catalysed reaction is 7-phospho-2-dehydro-3-deoxy-D-arabino-heptonate = 3-dehydroquinate + phosphate. It functions in the pathway metabolic intermediate biosynthesis; chorismate biosynthesis; chorismate from D-erythrose 4-phosphate and phosphoenolpyruvate: step 2/7. Catalyzes the conversion of 3-deoxy-D-arabino-heptulosonate 7-phosphate (DAHP) to dehydroquinate (DHQ). The polypeptide is 3-dehydroquinate synthase (Dictyoglomus turgidum (strain DSM 6724 / Z-1310)).